The primary structure comprises 207 residues: Urease accessory protein UreE (207 aa).

The tract at residues 171 to 207 (HHGHAHSHSHSHDHDHDHDHDHQHGPGCAHGHGHDHH) is disordered. Residues 180-194 (HSHDHDHDHDHDHQH) are compositionally biased toward basic and acidic residues.

This sequence belongs to the UreE family.

Its subcellular location is the cytoplasm. In terms of biological role, involved in urease metallocenter assembly. Binds nickel. Probably functions as a nickel donor during metallocenter assembly. This Burkholderia lata (strain ATCC 17760 / DSM 23089 / LMG 22485 / NCIMB 9086 / R18194 / 383) protein is Urease accessory protein UreE.